The primary structure comprises 168 residues: Transcriptional regulator MraZ (168 aa).

SpoVT-AbrB domains lie at 8 to 51 and 90 to 140; these read EYNQ…GGDR and ALNM…KADT.

Belongs to the MraZ family. Forms oligomers.

The protein localises to the cytoplasm. The protein resides in the nucleoid. The chain is Transcriptional regulator MraZ from Cereibacter sphaeroides (strain ATCC 17025 / ATH 2.4.3) (Rhodobacter sphaeroides).